Here is a 146-residue protein sequence, read N- to C-terminus: Zinc metalloproteinase-disintegrin salmosin-3 (146 aa).

One can recognise a Peptidase M12B domain in the interval 1-57 (SCPCDANSCIMSATLSNEPSSRFSDCSFSLPSRFSDCSFNQYSSDIIHYHECLLNEP). Disulfide bonds link cysteine 2–cysteine 37, cysteine 4–cysteine 9, cysteine 68–cysteine 87, cysteine 79–cysteine 97, cysteine 81–cysteine 92, cysteine 91–cysteine 114, cysteine 105–cysteine 111, cysteine 110–cysteine 135, and cysteine 123–cysteine 142. The Disintegrin domain maps to 65 to 146 (PPVCGNYYPE…GQSGVCPRNT (82 aa)). The short motif at 127 to 129 (RGD) is the Cell attachment site element.

The protein belongs to the venom metalloproteinase (M12B) family. P-II subfamily. P-IIb sub-subfamily. Monomer (disintegrin). Requires Zn(2+) as cofactor. Expressed by the venom gland.

Its subcellular location is the secreted. Its function is as follows. Snake venom zinc metalloproteinase that inhibits ADP-induced platelet aggregation (probably by binding integrin alpha-IIb/beta-3 (ITGA2B/ITGB3)) and degrades fibrinogen. In Gloydius brevicauda (Korean slamosa snake), this protein is Zinc metalloproteinase-disintegrin salmosin-3.